Consider the following 380-residue polypeptide: Kappa-type opioid receptor (380 aa).

Residues 1–57 (MESPIQIFRGDPGPTCSPSACLLPNSSSWFPNWAESDSNGSVGSEDQQLESAHISPA) lie on the Extracellular side of the membrane. Residues Asn-25 and Asn-39 are each glycosylated (N-linked (GlcNAc...) asparagine). A helical membrane pass occupies residues 58–85 (IPVIITAVYSVVFVVGLVGNSLVMFVII). The Cytoplasmic portion of the chain corresponds to 86 to 95 (RYTKMKTATN). A helical membrane pass occupies residues 96 to 119 (IYIFNLALADALVTTTMPFQSAVY). At 120–132 (LMNSWPFGDVLCK) the chain is on the extracellular side. Cys-131 and Cys-210 are disulfide-bonded. A helical membrane pass occupies residues 133-154 (IVISIDYYNMFTSIFTLTMMSV). The Cytoplasmic portion of the chain corresponds to 155–173 (DRYIAVCHPVKALDFRTPL). A helical membrane pass occupies residues 174 to 196 (KAKIINICIWLLASSVGISAIVL). Residues 197–222 (GGTKVREDVDVIECSLQFPDDEYSWW) lie on the Extracellular side of the membrane. A helical transmembrane segment spans residues 223–247 (DLFMKICVFVFAFVIPVLIIIVCYT). Topologically, residues 248 to 274 (LMILRLKSVRLLSGSREKDRNLRRITK) are cytoplasmic. The chain crosses the membrane as a helical span at residues 275–296 (LVLVVVAVFIICWTPIHIFILV). Residues 297–311 (EALGSTSHSTAALSS) are Extracellular-facing. The chain crosses the membrane as a helical span at residues 312–333 (YYFCIALGYTNSSLNPVLYAFL). Residues 334 to 380 (DENFKRCFRDFCFPIKMRMERQSTNRVRNTVQDPASMRDVGGMNKPV) lie on the Cytoplasmic side of the membrane. Cys-345 carries the S-palmitoyl cysteine lipid modification.

The protein belongs to the G-protein coupled receptor 1 family. As to quaternary structure, interacts with NHERF1. Interacts with GABARAPL1. As to expression, detected in brain (at protein level). Brain (neocortex, hippocampus, amygdala, medial habenula, hypothalamus, locus ceruleus, and parabrachial nucleus).

The protein resides in the cell membrane. Functionally, G-protein coupled opioid receptor that functions as a receptor for endogenous alpha-neoendorphins and dynorphins, but has low affinity for beta-endorphins. Also functions as a receptor for various synthetic opioids and for the psychoactive diterpene salvinorin A. Ligand binding causes a conformation change that triggers signaling via guanine nucleotide-binding proteins (G proteins) and modulates the activity of down-stream effectors, such as adenylate cyclase. Signaling leads to the inhibition of adenylate cyclase activity. Inhibits neurotransmitter release by reducing calcium ion currents and increasing potassium ion conductance. Plays a role in the perception of pain. Plays a role in mediating reduced physical activity upon treatment with synthetic opioids. Plays a role in the regulation of salivation in response to synthetic opioids. May play a role in arousal and regulation of autonomic and neuroendocrine functions. The sequence is that of Kappa-type opioid receptor (Oprk1) from Mus musculus (Mouse).